A 1415-amino-acid polypeptide reads, in one-letter code: MAHGEPYYSSKPDKDFNFGSTMARRQMTPTMVAKLPNFVRNSPQAYDWIVRGLIFPTTGKTYFQRVVVITGGLEDGTYGSFVFDGREWVEIYPIEHLNLMSSLKLIHKANALQERLRLSQEEKATLALDVQFLQHENVRLKELIPKPEPRKIQMKWIIVGAVLTFLSLIPGGYAQSQINNTIFTDMIAACKYSTETLTENLDLRIKLALANITISDKLDAVRQILNFAFVPRAHWLRTVFYYIHYYEMWNIFMFVLAIGTVMRSARPGTDLITLATSHLSGFRMAVLPTIPFHTTMTLWVMNTLMVCYYFDNLLAITLAILAPILGIIFLCFMEDSNYVSQIRGLIATAVLIAGGHACLTLTGTTTSLFVVILTCRFIRMATVFIGTRFEIRDANGKVVATVPTRIKNVAFDFFQKLKQSGVRVGVNEFVVIKPGALCVIDTPEGKGTGFFSGNDIVTAAHAVGNNTFVNVCYEGLMYEAKVRYMPEKDIAFITCPGDLHPTARLKLSKNPDYSCVTVMAYVNEDLVVSTAAAMVHGNTLSYAVRTQDGMSGAPVCDKYGRVLAVHQTNTGYTGGAVIIDPTDFHPVKAPSRVELLKEEIERLKAQLNSAAENPATAVTQQPVVTLEQKSVSDSDVVDLVRTAMEREMKVLRDEINGILAPFLQKKKGKTKHGRGRVRRNLRKGVKLLTEEEYRELLEKGLDRETFLDLIDRIIGERSGYPDYDDEDYYDEDDDGWGVVGDDVEFDYTEVINFDQAKPTPAPRTVKPKTCPEPEAETQPLDLSQKKEKQLEHEQQVVKSTKPQKNEPQPYSQTYGKAPIWESYDFDWDEDDAKFILPAPHRLTKADEIVLGSKIVKLRTIIETAIKTQNYSALPEAVFELDKAAYEAGLEGFLQRVKSKKGSKKLQRAPEDQGAQNYHSLDAWKSLLEPPRERRCVPANFPLLGHLPINRPIFDDKKPRDDLLGLLPEPTWHAFEEYGPTTWGPQAFIKSFDKFFYAEPIDFFSEYPQLCAFADWATYREFRYLEDTRVIHITATEKNTDSTPAYPKMNYFDTEENYLEAHGWAPYIREFTRVFKGDKPEVLWYLFLKKEIIKEEKIRNSDIRQIVCADPIYTRIGACLEAHQNALMKQHTDTSVGQCGWSPMEGGFKKTMQRLVNKGNKHFIEFDWTRYDGTIPPALFKHIKEIRWNFINKDQREKYKHVHEWYVDNLLNRHVLLPSGEVTLQTRGNPSGQFSTTMDNNMVNFWSQAFEFAYFNGPDKDLWKTYDTVVYGDDRLSTTPSVPDDYEERVINMYRDIFGMWVKPGKVICRDSIVGLSFCGFTVNENLEPVPTSPEKLMASLLKPYKILPDLESLHGKLLCYQLLAAFMAEDHPFKVYVEHCLSRTAKQLRDSGLPARLTEEQLHRIWRGGPKKCDG.

Positions 104–142 form a coiled coil; it reads KLIHKANALQERLRLSQEEKATLALDVQFLQHENVRLKE. 5 helical membrane-spanning segments follow: residues 154-174, 239-259, 286-306, 313-333, and 344-364; these read MKWI…GGYA, VFYY…LAIG, VLPT…TLMV, LLAI…LCFM, and GLIA…LTGT. Residues histidine 461, aspartate 489, and serine 551 each act as charge relay system; for serine protease activity in the active site. Residues 587-616 are a coiled coil; that stretch reads VKAPSRVELLKEEIERLKAQLNSAAENPAT. An O-(5'-phospho-RNA)-tyrosine modification is found at tyrosine 693. Residues 753–813 form a disordered region; sequence FDQAKPTPAP…KNEPQPYSQT (61 aa). The span at 783 to 795 shows a compositional bias: basic and acidic residues; the sequence is SQKKEKQLEHEQQ. The segment covering 800–813 has biased composition (polar residues); it reads TKPQKNEPQPYSQT. One can recognise a RdRp catalytic domain in the interval 1160-1286; that stretch reads KHFIEFDWTR…TTPSVPDDYE (127 aa).

The protein belongs to the astroviridae polyprotein 1AB family. As to quaternary structure, monomer. In terms of processing, cleaved by the viral and host proteases. The protease is probably autocatalytically cleaved.

The protein resides in the host membrane. It catalyses the reaction RNA(n) + a ribonucleoside 5'-triphosphate = RNA(n+1) + diphosphate. Responsible for the cleavage of the polyprotein into functional products. Functionally, covalently attached to the 5' extremity of the genomic and subgenomic RNAs. It may serve as a primer for the replicase. This chain is Non-structural polyprotein 1AB (ORF1), found in Human astrovirus-4 (HAstV-4).